The chain runs to 132 residues: Fatty acid-binding protein 12 (132 aa).

Residues arginine 107 and 127 to 129 (RTY) contribute to the a fatty acid site.

The protein belongs to the calycin superfamily. Fatty-acid binding protein (FABP) family. Highly expressed in adult retina and testis.

May play a role in lipid transport. This chain is Fatty acid-binding protein 12 (Fabp12), found in Mus musculus (Mouse).